Here is a 621-residue protein sequence, read N- to C-terminus: Threonine--tRNA ligase (621 aa).

Positions 1-137 (MRILQLHCDS…ESSKVVTKDS (137 aa)) are editing domain. The segment at 128-150 (ESSKVVTKDSTTKDDDEDTSDAL) is disordered. Residues 202–501 (PHVALMKKLA…SKKGKKPQLP (300 aa)) form a catalytic region. Zn(2+) is bound by residues C294, H346, and H470. Over residues 598-612 (QTSGKPYTGLNQSQH) the composition is skewed to polar residues. Residues 598-621 (QTSGKPYTGLNQSQHLSKRPQLMV) are disordered.

The protein belongs to the class-II aminoacyl-tRNA synthetase family. Homodimer. It depends on Zn(2+) as a cofactor.

The protein resides in the cytoplasm. It carries out the reaction tRNA(Thr) + L-threonine + ATP = L-threonyl-tRNA(Thr) + AMP + diphosphate + H(+). Its function is as follows. Catalyzes the attachment of threonine to tRNA(Thr) in a two-step reaction: L-threonine is first activated by ATP to form Thr-AMP and then transferred to the acceptor end of tRNA(Thr). Also edits incorrectly charged L-seryl-tRNA(Thr). This is Threonine--tRNA ligase from Nitrosopumilus maritimus (strain SCM1).